The sequence spans 105 residues: Death-associated protein 1 homolog (105 aa).

A disordered region spans residues 75–105 (AAQVAHQKPVPSAQKLPAGQHLNQHIHQPRK). A compositionally biased stretch (polar residues) spans 95–105 (HLNQHIHQPRK).

The protein belongs to the DAP-DAPL1 family. In terms of assembly, associates with ribosomes; inhibiting translation. Interacts with eiF5a (eif5a and eif5a2); inhibiting translation.

Functionally, ribosome-binding protein involved in ribosome hibernation, a process during which ribosomes are stabilized in an inactive state and preserved from proteasomal degradation. Acts via its association with eiF5a (eif5a and eif5a2) at the polypeptide exit tunnel of the ribosome, preventing mRNA translation. Involved in ribosome hibernation in the mature egg by preventing mRNA translation, leading to ribosome inactivation. Ribosomes, which are produced in large quantities during oogenesis, are stored and translationally repressed in the egg and early embryo. Compared to dap1b, binds and inactivates ribosomes less efficiently. The sequence is that of Death-associated protein 1 homolog from Danio rerio (Zebrafish).